A 178-amino-acid polypeptide reads, in one-letter code: Conodipine-P2 (178 aa).

The signal sequence occupies residues 1 to 24 (MKLLAPVLWAMAALGVTWLVAVDS). A 4-hydroxyproline mark is found at P38, P42, and P49. H54 is an active-site residue. The propeptide at 98–130 (KREVTSHRATSIAHSRLWKTALDQKSFLNRKAR) is interchain peptide. Q131 is subject to Pyrrolidone carboxylic acid. P137 carries the post-translational modification 4-hydroxyproline.

It belongs to the phospholipase A2 family. Group IX subfamily. In terms of assembly, heterodimer of an alpha and a beta chain; probably disulfide-linked. It depends on Ca(2+) as a cofactor. In terms of tissue distribution, expressed by the venom duct.

The protein resides in the secreted. It carries out the reaction a 1,2-diacyl-sn-glycero-3-phosphocholine + H2O = a 1-acyl-sn-glycero-3-phosphocholine + a fatty acid + H(+). Catalyzes the calcium-dependent hydrolysis of the 2-acyl groups in 3-sn-phosphoglycerides. This Conus purpurascens (Purple cone) protein is Conodipine-P2.